The following is a 149-amino-acid chain: Large ribosomal subunit protein uL13 (149 aa).

This sequence belongs to the universal ribosomal protein uL13 family. Part of the 50S ribosomal subunit.

In terms of biological role, this protein is one of the early assembly proteins of the 50S ribosomal subunit, although it is not seen to bind rRNA by itself. It is important during the early stages of 50S assembly. In Thermosipho africanus (strain TCF52B), this protein is Large ribosomal subunit protein uL13.